The primary structure comprises 80 residues: Homeobox protein 7 (80 aa).

The homeobox DNA-binding region spans 8 to 67 (SNIRNIRSSGISTKKLEDFFSINQYPNKNEIKDFANYYQCDETKIKNWFKGKRDRLKKKS). The interval 60-80 (RDRLKKKSSNNEKSGNKFYFK) is disordered. Residues 70–80 (NEKSGNKFYFK) show a composition bias toward low complexity.

The protein resides in the nucleus. In terms of biological role, putative transcription factor. The polypeptide is Homeobox protein 7 (hbx7) (Dictyostelium discoideum (Social amoeba)).